Here is a 421-residue protein sequence, read N- to C-terminus: Testin (421 aa).

Positions 92–199 constitute a PET domain; that stretch reads MILTNPVAAK…GDVKLPCEMD (108 aa). Residues 133–164 are disordered; the sequence is EKQPVAGSEGAQYRKKQLAKQLPAHDQDPSKC. Basic and acidic residues predominate over residues 155–164; sequence PAHDQDPSKC. LIM zinc-binding domains are found at residues 234–297, 299–359, and 362–421; these read YSCY…CDSE, PRCA…NHAV, and QGCH…KMMS.

It belongs to the prickle / espinas / testin family. In terms of assembly, interacts via LIM domain 1 with ZYX. Interacts (via LIM domain 3) with ENAH and VASP. Interacts with ALKBH4, talin, actin, alpha-actinin, GRIP1 and PXN. Interacts (via LIM domain 2) with ACTL7A (via N-terminus). Heterodimer with ACTL7A; the heterodimer interacts with ENAH to form a heterotrimer.

Its subcellular location is the cytoplasm. It localises to the cell junction. The protein localises to the focal adhesion. Its function is as follows. Scaffold protein that may play a role in cell adhesion, cell spreading and in the reorganization of the actin cytoskeleton. Plays a role in the regulation of cell proliferation. May act as a tumor suppressor. In Colobus guereza (Mantled guereza), this protein is Testin (TES).